The sequence spans 148 residues: uncharacterized protein (148 aa).

It belongs to the SufE family.

This is an uncharacterized protein from Rhizobium etli (strain ATCC 51251 / DSM 11541 / JCM 21823 / NBRC 15573 / CFN 42).